Reading from the N-terminus, the 699-residue chain is tRNA(Met) cytidine acetyltransferase TmcA (699 aa).

ATP-binding positions include Gln178, 200-209, and Arg322; that span reads GRGKSTLAGM. Positions 408-547 constitute an N-acetyltransferase domain; sequence MHIASAQVAG…SGCYSAMAIL (140 aa). Residues 475 to 477 and 482 to 488 contribute to the acetyl-CoA site; these read IAV and RRQGIGR.

Belongs to the RNA cytidine acetyltransferase family. TmcA subfamily.

It is found in the cytoplasm. The catalysed reaction is cytidine(34) in elongator tRNA(Met) + acetyl-CoA + ATP + H2O = N(4)-acetylcytidine(34) in elongator tRNA(Met) + ADP + phosphate + CoA + H(+). In terms of biological role, catalyzes the formation of N(4)-acetylcytidine (ac(4)C) at the wobble position of tRNA(Met), by using acetyl-CoA as an acetyl donor and ATP (or GTP). This Pectobacterium atrosepticum (strain SCRI 1043 / ATCC BAA-672) (Erwinia carotovora subsp. atroseptica) protein is tRNA(Met) cytidine acetyltransferase TmcA.